The primary structure comprises 528 residues: Putative galacturonosyltransferase 2 (528 aa).

The protein belongs to the glycosyltransferase 8 family.

It functions in the pathway glycan metabolism; pectin biosynthesis. Functionally, may be involved in pectin and/or xylans biosynthesis in cell walls. The sequence is that of Putative galacturonosyltransferase 2 (GAUT2) from Arabidopsis thaliana (Mouse-ear cress).